Consider the following 286-residue polypeptide: 2-hydroxy-6-oxononadienedioate/2-hydroxy-6-oxononatrienedioate hydrolase 2 (286 aa).

His266 acts as the Proton acceptor in catalysis.

The protein belongs to the AB hydrolase superfamily. MhpC family. Homodimer.

The catalysed reaction is (2Z,4E)-2-hydroxy-6-oxonona-2,4-dienedioate + H2O = (2Z)-2-hydroxypenta-2,4-dienoate + succinate + H(+). It catalyses the reaction (2Z,4E,7E)-2-hydroxy-6-oxonona-2,4,7-trienedioate + H2O = (2Z)-2-hydroxypenta-2,4-dienoate + fumarate + H(+). It functions in the pathway aromatic compound metabolism; 3-phenylpropanoate degradation. In terms of biological role, catalyzes the cleavage of the C5-C6 bond of 2-hydroxy-6-oxononadienedioate and 2-hydroxy-6-oxononatrienedioate, a dienol ring fission product of the bacterial meta-cleavage pathway for degradation of phenylpropionic acid. This chain is 2-hydroxy-6-oxononadienedioate/2-hydroxy-6-oxononatrienedioate hydrolase 2, found in Pseudomonas putida (Arthrobacter siderocapsulatus).